The primary structure comprises 159 residues: uncharacterized protein (159 aa).

A disordered region spans residues 1–139; the sequence is MSRRAPGSRL…RKSQERSMSY (139 aa). Residues 9 to 31 show a composition bias toward polar residues; sequence RLSSGGTNYSRSWNDWQPRTDSA. Basic and acidic residues predominate over residues 65–82; sequence QRHDDTRVHADIQNDEKG. Residues 105-119 are compositionally biased toward polar residues; sequence RVNNVTSPEFTSVQH. Basic and acidic residues predominate over residues 125–134; the sequence is ATKDMRKSQE.

This is an uncharacterized protein from Homo sapiens (Human).